Reading from the N-terminus, the 122-residue chain is Urease subunit beta (122 aa).

Belongs to the urease beta subunit family. In terms of assembly, heterotrimer of UreA (gamma), UreB (beta) and UreC (alpha) subunits. Three heterotrimers associate to form the active enzyme.

The protein localises to the cytoplasm. It catalyses the reaction urea + 2 H2O + H(+) = hydrogencarbonate + 2 NH4(+). It participates in nitrogen metabolism; urea degradation; CO(2) and NH(3) from urea (urease route): step 1/1. The protein is Urease subunit beta of Lysinibacillus sphaericus (strain C3-41).